We begin with the raw amino-acid sequence, 181 residues long: Probable mitochondrial import inner membrane translocase subunit tim-17B.1 (181 aa).

Transmembrane regions (helical) follow at residues 17–37, 61–81, and 109–129; these read IGSA…FGGY, GVQF…LVAI, and VMAG…GVGL. Residues 137–181 are disordered; it reads AMMDPTQPPPEALDDPRSLGQKSQAEPGLDQTRPFGIPTGLPNLS.

Belongs to the Tim17/Tim22/Tim23 family.

Its subcellular location is the mitochondrion inner membrane. Functionally, essential component of the TIM23 complex, a complex that mediates the translocation of transit peptide-containing proteins across the mitochondrial inner membrane. This is Probable mitochondrial import inner membrane translocase subunit tim-17B.1 from Caenorhabditis elegans.